The sequence spans 458 residues: tRNA modification GTPase MnmE (458 aa).

Positions 22, 84, and 123 each coordinate (6S)-5-formyl-5,6,7,8-tetrahydrofolate. Positions 220–379 (GIATAIIGRP…LEKAIADLFF (160 aa)) constitute a TrmE-type G domain. Residue N230 coordinates K(+). Residues 230-235 (NVGKSS), 249-255 (TDIAGTT), and 274-277 (DTAG) contribute to the GTP site. S234 provides a ligand contact to Mg(2+). Positions 249, 251, and 254 each coordinate K(+). Mg(2+) is bound at residue T255. Position 458 (K458) interacts with (6S)-5-formyl-5,6,7,8-tetrahydrofolate.

Belongs to the TRAFAC class TrmE-Era-EngA-EngB-Septin-like GTPase superfamily. TrmE GTPase family. As to quaternary structure, homodimer. Heterotetramer of two MnmE and two MnmG subunits. Requires K(+) as cofactor.

It is found in the cytoplasm. Functionally, exhibits a very high intrinsic GTPase hydrolysis rate. Involved in the addition of a carboxymethylaminomethyl (cmnm) group at the wobble position (U34) of certain tRNAs, forming tRNA-cmnm(5)s(2)U34. The chain is tRNA modification GTPase MnmE from Bacillus cereus (strain ZK / E33L).